The primary structure comprises 194 residues: ATP synthase subunit delta (194 aa).

The protein belongs to the ATPase delta chain family. F-type ATPases have 2 components, F(1) - the catalytic core - and F(0) - the membrane proton channel. F(1) has five subunits: alpha(3), beta(3), gamma(1), delta(1), epsilon(1). F(0) has three main subunits: a(1), b(2) and c(10-14). The alpha and beta chains form an alternating ring which encloses part of the gamma chain. F(1) is attached to F(0) by a central stalk formed by the gamma and epsilon chains, while a peripheral stalk is formed by the delta and b chains.

Its subcellular location is the cell inner membrane. In terms of biological role, f(1)F(0) ATP synthase produces ATP from ADP in the presence of a proton or sodium gradient. F-type ATPases consist of two structural domains, F(1) containing the extramembraneous catalytic core and F(0) containing the membrane proton channel, linked together by a central stalk and a peripheral stalk. During catalysis, ATP synthesis in the catalytic domain of F(1) is coupled via a rotary mechanism of the central stalk subunits to proton translocation. Functionally, this protein is part of the stalk that links CF(0) to CF(1). It either transmits conformational changes from CF(0) to CF(1) or is implicated in proton conduction. This chain is ATP synthase subunit delta, found in Bartonella bacilliformis (strain ATCC 35685 / KC583 / Herrer 020/F12,63).